The primary structure comprises 755 residues: Metabotropic glutamate receptor-like protein B (755 aa).

The N-terminal stretch at Met-1–Ser-23 is a signal peptide. N-linked (GlcNAc...) asparagine glycans are attached at residues Asn-16, Asn-183, and Asn-273. Residues Lys-24 to Gly-385 are Extracellular-facing. A helical transmembrane segment spans residues Ile-386–Val-406. Residues Phe-407–Ser-417 are Cytoplasmic-facing. Residues Pro-418 to Phe-438 traverse the membrane as a helical segment. Residues Ser-439–Ser-455 lie on the Extracellular side of the membrane. Residues Ile-456 to Phe-476 traverse the membrane as a helical segment. The Cytoplasmic portion of the chain corresponds to Asp-477–Tyr-492. A helical transmembrane segment spans residues Pro-493–Gly-513. Residues Asn-514–Gly-541 lie on the Extracellular side of the membrane. Residues Ser-542–Ile-562 traverse the membrane as a helical segment. Residues Ser-563–Lys-578 lie on the Cytoplasmic side of the membrane. The chain crosses the membrane as a helical span at residues Pro-579 to Val-599. Topologically, residues Ser-600 to Gln-607 are extracellular. A helical transmembrane segment spans residues Val-608 to Gly-628. Residues Ser-629–Leu-755 lie on the Cytoplasmic side of the membrane. Disordered regions lie at residues Gln-656 to Gly-676 and Phe-691 to Glu-729. Positions Asp-694–Asp-710 are enriched in acidic residues.

The protein in the N-terminal section; belongs to the BMP lipoprotein family. This sequence in the C-terminal section; belongs to the G-protein coupled receptor 3 family. GABA-B receptor subfamily.

It is found in the membrane. In Dictyostelium discoideum (Social amoeba), this protein is Metabotropic glutamate receptor-like protein B (grlB).